Consider the following 130-residue polypeptide: Small ribosomal subunit protein uS9 (130 aa).

Positions valine 111–arginine 130 are disordered. Positions proline 116–arginine 130 are enriched in basic residues.

It belongs to the universal ribosomal protein uS9 family.

The polypeptide is Small ribosomal subunit protein uS9 (Lactococcus lactis subsp. lactis (strain IL1403) (Streptococcus lactis)).